Reading from the N-terminus, the 298-residue chain is GTP cyclohydrolase FolE2 (298 aa).

Belongs to the GTP cyclohydrolase IV family.

It catalyses the reaction GTP + H2O = 7,8-dihydroneopterin 3'-triphosphate + formate + H(+). The protein operates within cofactor biosynthesis; 7,8-dihydroneopterin triphosphate biosynthesis; 7,8-dihydroneopterin triphosphate from GTP: step 1/1. In terms of biological role, converts GTP to 7,8-dihydroneopterin triphosphate. The protein is GTP cyclohydrolase FolE2 of Neisseria meningitidis serogroup C (strain 053442).